The following is a 199-amino-acid chain: MSEISAQLVKELREITGAGMMDCKKALRESNGDKVMAIETLRKKGLASADRKANKVATEGVIVSYIHTGYKIGVLVEVNCETDFVARRNEFKDFAKDIAMQIAASPSVEYITFNDIPAEIIEKEKKIESMREDLKNKPEDIKQKIIEGRIRKNLELLVLYDQAYMRDQSINIETLVKLKISYFNENIKIRRFTKYILGN.

It belongs to the EF-Ts family.

It localises to the plastid. It is found in the chloroplast. In terms of biological role, associates with the EF-Tu.GDP complex and induces the exchange of GDP to GTP. It remains bound to the aminoacyl-tRNA.EF-Tu.GTP complex up to the GTP hydrolysis stage on the ribosome. The polypeptide is Elongation factor Ts, chloroplastic (tsf) (Galdieria sulphuraria (Red alga)).